Reading from the N-terminus, the 487-residue chain is Aspartyl/glutamyl-tRNA(Asn/Gln) amidotransferase subunit B (487 aa).

Belongs to the GatB/GatE family. GatB subfamily. As to quaternary structure, heterotrimer of A, B and C subunits.

It catalyses the reaction L-glutamyl-tRNA(Gln) + L-glutamine + ATP + H2O = L-glutaminyl-tRNA(Gln) + L-glutamate + ADP + phosphate + H(+). The enzyme catalyses L-aspartyl-tRNA(Asn) + L-glutamine + ATP + H2O = L-asparaginyl-tRNA(Asn) + L-glutamate + ADP + phosphate + 2 H(+). Functionally, allows the formation of correctly charged Asn-tRNA(Asn) or Gln-tRNA(Gln) through the transamidation of misacylated Asp-tRNA(Asn) or Glu-tRNA(Gln) in organisms which lack either or both of asparaginyl-tRNA or glutaminyl-tRNA synthetases. The reaction takes place in the presence of glutamine and ATP through an activated phospho-Asp-tRNA(Asn) or phospho-Glu-tRNA(Gln). This chain is Aspartyl/glutamyl-tRNA(Asn/Gln) amidotransferase subunit B, found in Leptospira biflexa serovar Patoc (strain Patoc 1 / Ames).